The following is a 180-amino-acid chain: ATP-dependent protease subunit HslV (180 aa).

The active site involves T7. Na(+) contacts are provided by A162, C165, and T168.

This sequence belongs to the peptidase T1B family. HslV subfamily. A double ring-shaped homohexamer of HslV is capped on each side by a ring-shaped HslU homohexamer. The assembly of the HslU/HslV complex is dependent on binding of ATP.

Its subcellular location is the cytoplasm. It catalyses the reaction ATP-dependent cleavage of peptide bonds with broad specificity.. Its activity is regulated as follows. Allosterically activated by HslU binding. Protease subunit of a proteasome-like degradation complex believed to be a general protein degrading machinery. This chain is ATP-dependent protease subunit HslV, found in Dichelobacter nodosus (strain VCS1703A).